Consider the following 407-residue polypeptide: UPF0761 membrane protein AZOSEA40600 (407 aa).

A run of 6 helical transmembrane segments spans residues 29–49, 92–112, 132–152, 174–194, 207–227, and 239–259; these read SLAF…IALF, GLTL…LMTI, LMVH…SVLA, FARL…YYAV, GGIA…LFIV, and FAVL…ILLG.

It belongs to the UPF0761 family.

It is found in the cell inner membrane. The sequence is that of UPF0761 membrane protein AZOSEA40600 from Aromatoleum aromaticum (strain DSM 19018 / LMG 30748 / EbN1) (Azoarcus sp. (strain EbN1)).